A 404-amino-acid polypeptide reads, in one-letter code: Probable tRNA sulfurtransferase (404 aa).

A THUMP domain is found at 60 to 165; the sequence is QPVVEALKLV…DEAAYISYEE (106 aa). ATP-binding positions include 183–184, 208–209, Arg-265, Gly-287, and Gln-296; these read ML and HF.

The protein belongs to the ThiI family.

The protein resides in the cytoplasm. The catalysed reaction is [ThiI sulfur-carrier protein]-S-sulfanyl-L-cysteine + a uridine in tRNA + 2 reduced [2Fe-2S]-[ferredoxin] + ATP + H(+) = [ThiI sulfur-carrier protein]-L-cysteine + a 4-thiouridine in tRNA + 2 oxidized [2Fe-2S]-[ferredoxin] + AMP + diphosphate. It carries out the reaction [ThiS sulfur-carrier protein]-C-terminal Gly-Gly-AMP + S-sulfanyl-L-cysteinyl-[cysteine desulfurase] + AH2 = [ThiS sulfur-carrier protein]-C-terminal-Gly-aminoethanethioate + L-cysteinyl-[cysteine desulfurase] + A + AMP + 2 H(+). The protein operates within cofactor biosynthesis; thiamine diphosphate biosynthesis. Catalyzes the ATP-dependent transfer of a sulfur to tRNA to produce 4-thiouridine in position 8 of tRNAs, which functions as a near-UV photosensor. Also catalyzes the transfer of sulfur to the sulfur carrier protein ThiS, forming ThiS-thiocarboxylate. This is a step in the synthesis of thiazole, in the thiamine biosynthesis pathway. The sulfur is donated as persulfide by IscS. The sequence is that of Probable tRNA sulfurtransferase from Streptococcus pyogenes serotype M5 (strain Manfredo).